A 216-amino-acid polypeptide reads, in one-letter code: Small ribosomal subunit protein uS3 (216 aa).

Positions 20 to 91 constitute a KH type-2 domain; it reads LKEFFEKALV…SVEIVVEKVH (72 aa).

The protein belongs to the universal ribosomal protein uS3 family.

This Encephalitozoon cuniculi (strain GB-M1) (Microsporidian parasite) protein is Small ribosomal subunit protein uS3 (RPS3).